Reading from the N-terminus, the 637-residue chain is PTS system mannitol-specific EIICBA component (637 aa).

The Cytoplasmic portion of the chain corresponds to 1-23 (MSSDIKIKVQSFGRFLSNMVMPN). In terms of domain architecture, PTS EIIC type-2 spans 12-341 (FGRFLSNMVM…ILLKTSKVKE (330 aa)). A helical transmembrane segment spans residues 24-45 (IGAFIAWGIITALFIPTGWLPN). Residues 46–49 (ETLA) are Periplasmic-facing. A helical membrane pass occupies residues 50–70 (KLVGPMITYLLPLLIGYTGGK). Topologically, residues 71–133 (LVGGERGGVV…SGFEMLVNNF (63 aa)) are cytoplasmic. A helical membrane pass occupies residues 134–155 (SAGIIGMILAILAFLGIGPIVE). The Periplasmic portion of the chain corresponds to 156–164 (ALSKMLAAG). A helical membrane pass occupies residues 165 to 185 (VNFMVVHDMLPLASIFVEPAK). The Cytoplasmic segment spans residues 186-272 (ILFLNNAINH…VLMNPRLILA (87 aa)). A helical transmembrane segment spans residues 273–292 (VILGGMTGVFTLTILGGGLV). Residues 293–312 (SPASPGSILAVLAMTPKGAY) are Periplasmic-facing. The chain crosses the membrane as a helical span at residues 313 to 334 (FANIAGVCAAMAVSFVVSAILL). Topologically, residues 335–637 (KTSKVKEEDD…EVLELLAGRK (303 aa)) are cytoplasmic. Residues 378-473 (RKIIVACDAG…RLVAAQRHTA (96 aa)) form the PTS EIIB type-2 domain. Cys384 serves as the catalytic Phosphocysteine intermediate; for EIIB activity. Cys384 carries the post-translational modification Phosphocysteine; by EIIA. Positions 494-636 (FKLGAENIFL…DEVLELLAGR (143 aa)) constitute a PTS EIIA type-2 domain. The active-site Tele-phosphohistidine intermediate; for EIIA activity is His554. His554 is subject to Phosphohistidine; by HPr.

As to quaternary structure, homodimer. An intramolecular phosphotransfer takes places between His-554 and Cys-384.

The protein resides in the cell inner membrane. The enzyme catalyses D-mannitol(out) + N(pros)-phospho-L-histidyl-[protein] = D-mannitol 1-phosphate(in) + L-histidyl-[protein]. In terms of biological role, the phosphoenolpyruvate-dependent sugar phosphotransferase system (sugar PTS), a major carbohydrate active transport system, catalyzes the phosphorylation of incoming sugar substrates concomitantly with their translocation across the cell membrane. This system is involved in D-mannitol transport. Also able to use D-mannonic acid. This Escherichia coli (strain K12) protein is PTS system mannitol-specific EIICBA component.